A 176-amino-acid chain; its full sequence is Small ribosomal subunit protein uS5 (176 aa).

Residues 15 to 78 (FEERIVEIRR…SAARRNVFEV (64 aa)) enclose the S5 DRBM domain.

Belongs to the universal ribosomal protein uS5 family. In terms of assembly, part of the 30S ribosomal subunit. Contacts proteins S4 and S8.

With S4 and S12 plays an important role in translational accuracy. Functionally, located at the back of the 30S subunit body where it stabilizes the conformation of the head with respect to the body. This Thermosipho africanus (strain TCF52B) protein is Small ribosomal subunit protein uS5.